A 385-amino-acid chain; its full sequence is Citrate synthase (385 aa).

Residues H223, H263, and D318 contribute to the active site.

The protein belongs to the citrate synthase family. As to quaternary structure, homodimer.

The enzyme catalyses oxaloacetate + acetyl-CoA + H2O = citrate + CoA + H(+). Its pathway is carbohydrate metabolism; tricarboxylic acid cycle; isocitrate from oxaloacetate: step 1/2. Its activity is regulated as follows. Allosterically inhibited by NADH. This Thermoplasma acidophilum (strain ATCC 25905 / DSM 1728 / JCM 9062 / NBRC 15155 / AMRC-C165) protein is Citrate synthase (gltA).